The sequence spans 1153 residues: Bifunctional dioxygenase (DOX)-epoxy alcohol synthase (EAS) (1153 aa).

The span at 46-56 shows a compositional bias: low complexity; the sequence is SSKESPSRKSS. A disordered region spans residues 46–113; sequence SSKESPSRKS…TQHGDGTYPT (68 aa). The segment covering 57–74 has biased composition (polar residues); sequence TIGQSTRNGSCQADTQKG. Basic and acidic residues predominate over residues 81-98; sequence EKPKPVKENPMKKLKEMS. A fatty acid alpha-dioxygenase region spans residues 177–525; it reads TDSLINELWE…DGKFDDDDLV (349 aa). Histidine 276 contacts heme b. Tyrosine 454 is a catalytic residue. Histidine 457 contacts heme b. Residues 732–1153 form an epoxy alcohol synthase region; it reads RVNITSYGGA…VTMRVMWDDE (422 aa). Heme is bound at residue cysteine 1086.

The protein in the N-terminal section; belongs to the peroxidase family. This sequence in the C-terminal section; belongs to the cytochrome P450 family. In terms of assembly, homotetramer. Heme b is required as a cofactor. Requires heme as cofactor.

The catalysed reaction is (9Z)-octadecenoate + O2 = (8R)-hydroperoxy-(9Z)-octadecenoate. It carries out the reaction (9Z)-octadecenoate + O2 = 10-hydroperoxy-(8E)-octadecenoate. The enzyme catalyses (9Z,12Z)-octadecadienoate + O2 = (8E,10R,12Z)-10-hydroperoxyoctadeca-8,12-dienoate. It catalyses the reaction (9Z,12Z,15Z)-octadecatrienoate + O2 = (10R)-hydroperoxy-(8E,12Z,15Z)-octadecatrienoate. The catalysed reaction is (9Z,12Z,15Z)-octadecatrienoate + O2 = (8R)-hydroperoxy-(9Z,12Z,15Z)-octadecatrienoate. It carries out the reaction (11Z,14Z)-eicosadienoate + O2 = 12-hydroperoxy-(10E,14Z)-eicosadienoate. The enzyme catalyses (11Z,14Z,17Z)-eicosatrienoate + O2 = 12-hydroperoxy-(10E,14Z,17Z)-eicosatrienoate. It catalyses the reaction (12R,13S)-epoxy-(9Z)-octadecenoate + O2 = (12R,13S)-epoxy-(10R)-hydroperoxy-(8E)-octadecenoate. The catalysed reaction is (8E,10R,12Z)-10-hydroperoxyoctadeca-8,12-dienoate = (12S,13R)-epoxy-(10R)-hydroxy-(8E)-octadecenoate. It carries out the reaction (10R)-hydroperoxy-(8E,12Z,15Z)-octadecatrienoate = 12,13-epoxy-(10R)-hydroxy-(8E,15Z)-octadecadienoate. The enzyme catalyses 12-hydroperoxy-(10E,14Z)-eicosadienoate = 10,11-epoxy-12-hydroxy-(14Z)-eicosenoate. It catalyses the reaction 12-hydroperoxy-(10E,14Z,17Z)-eicosatrienoate = 14,15-epoxy-12-hydroxy-(10E,17Z)-eicosadienoate. The catalysed reaction is (13R)-hydroperoxy-(9Z,11E)-octadecadienoate = (12R,13R)-epoxy-(11S)-hydroxy-(9Z)-octadecenoate. It carries out the reaction (13S)-hydroperoxy-(9Z,11E)-octadecadienoate = (12R,13R)-epoxy-(11S)-hydroxy-(9Z)-octadecenoate. The enzyme catalyses 12-hydroperoxy-(10E,14Z)-eicosadienoate = 14,15-epoxy-12-hydroxy-(10E)-eicosenoate. It catalyses the reaction 12-hydroperoxy-(10E,14Z,17Z)-eicosatrienoate = 10,11-epoxy-12-hydroxy-(14Z,17Z)-eicosadienoate. Its function is as follows. Bifunctional dioxygenase (DOX)-epoxy alcohol synthase (EAS) that converts linoleic acid (18:2n-6) sequentially to 10(R)-hydroperoxy-8(E),12(Z)-octadecadienoic acid (10R-HPODE) and 10R-HPODE further to 12 S(13R)-epoxy-10(R)-hydroxy-8(E)-octadecenoic acid as the end product. Oxygenation at C-10 occurs by retention of the pro-R hydrogen of C-8 of 18:2n-6, suggesting antarafacial hydrogen abstraction and oxygenation. The epoxy alcohol is formed from 10R-HPODE, likely by heterolytic cleavage of the dioxygen bond and subsequent intramolecular epoxidation of the 12(Z) double bond. The DOX domain is also able to oxygenate position C-8 of linoleic acid to produce 8(R)-hydroperoxy-8(E),12(Z)-octadecadienoic acid (8R-HPODE). Moreover, the DOX domain can oxygenate alpha-linolenic acid (18:3n-3) at C-8 or C-10 to produce respectively 8HOTrE and 10HOTrE, oleic acid (18:1n-9) at C-8 or C-10 to produce respectively 8-H(P)OME and 10-H(P)OME (with 8R stereoisomer to over 95%), eicosadienoic acid (20:2n-6) at C-10 or C-12 to produce respectively 10(11)-epoxy-12-hydroxy-14(Z)-eicosenoic acid and 14(15)-epoxy-12-hydroxy-10(E)-eicosenoic acid, as well as eicosatrienoic acid (20:3n-3) at C-10 or C-12 to produce respectively 10(11)-epoxy-12-hydroxy-14(Z),17(Z)-eicosadienoic acid and 14(15)-epoxy-12-hydroxy-14(Z),17(Z)-eicosadienoic acid. On the other side, the enzyme EAS domain can also catalyze the conversion of 10HOTrE into 12(13)-epoxy-10(R)-hydroxy-8(E),15(Z)-octadecadienoic acid, 13-R-HPODE into the stereoisomers of 12(13)-epoxy-11-hydroxy-9(Z)-octadecenoic acids (erythro/threo, 1:4), as well as 13S-HPODE into the stereoisomers of 12(13)-epoxy-11-hydroxy-9(Z)-octadecenoic acids (erythro/threo, 1:4) (EAS activity). Gamma-linolenic acid (18:3n-6) is not a substrate. The sequence is that of Bifunctional dioxygenase (DOX)-epoxy alcohol synthase (EAS) from Pyricularia oryzae (strain 70-15 / ATCC MYA-4617 / FGSC 8958) (Rice blast fungus).